The chain runs to 237 residues: Phosphoribosylaminoimidazole-succinocarboxamide synthase (237 aa).

This sequence belongs to the SAICAR synthetase family.

It catalyses the reaction 5-amino-1-(5-phospho-D-ribosyl)imidazole-4-carboxylate + L-aspartate + ATP = (2S)-2-[5-amino-1-(5-phospho-beta-D-ribosyl)imidazole-4-carboxamido]succinate + ADP + phosphate + 2 H(+). It participates in purine metabolism; IMP biosynthesis via de novo pathway; 5-amino-1-(5-phospho-D-ribosyl)imidazole-4-carboxamide from 5-amino-1-(5-phospho-D-ribosyl)imidazole-4-carboxylate: step 1/2. The chain is Phosphoribosylaminoimidazole-succinocarboxamide synthase from Sodalis glossinidius (strain morsitans).